Consider the following 329-residue polypeptide: Ketol-acid reductoisomerase (NADP(+)) (329 aa).

The KARI N-terminal Rossmann domain occupies 2–181; it reads MKKYYESDAD…GATRAVVLET (180 aa). NADP(+)-binding positions include 25 to 28, Arg-48, Ser-52, and 82 to 85; these read YGSQ and DELQ. His-107 is a catalytic residue. Gly-133 lines the NADP(+) pocket. In terms of domain architecture, KARI C-terminal knotted spans 182–327; that stretch reads TFREETETDL…KEVRAMMPQF (146 aa). Residues Asp-190, Glu-194, Glu-226, and Glu-230 each coordinate Mg(2+). Residue Ser-251 coordinates substrate.

The protein belongs to the ketol-acid reductoisomerase family. Mg(2+) is required as a cofactor.

The enzyme catalyses (2R)-2,3-dihydroxy-3-methylbutanoate + NADP(+) = (2S)-2-acetolactate + NADPH + H(+). The catalysed reaction is (2R,3R)-2,3-dihydroxy-3-methylpentanoate + NADP(+) = (S)-2-ethyl-2-hydroxy-3-oxobutanoate + NADPH + H(+). It participates in amino-acid biosynthesis; L-isoleucine biosynthesis; L-isoleucine from 2-oxobutanoate: step 2/4. It functions in the pathway amino-acid biosynthesis; L-valine biosynthesis; L-valine from pyruvate: step 2/4. Involved in the biosynthesis of branched-chain amino acids (BCAA). Catalyzes an alkyl-migration followed by a ketol-acid reduction of (S)-2-acetolactate (S2AL) to yield (R)-2,3-dihydroxy-isovalerate. In the isomerase reaction, S2AL is rearranged via a Mg-dependent methyl migration to produce 3-hydroxy-3-methyl-2-ketobutyrate (HMKB). In the reductase reaction, this 2-ketoacid undergoes a metal-dependent reduction by NADPH to yield (R)-2,3-dihydroxy-isovalerate. The protein is Ketol-acid reductoisomerase (NADP(+)) of Methanoregula boonei (strain DSM 21154 / JCM 14090 / 6A8).